A 222-amino-acid polypeptide reads, in one-letter code: Probable transaldolase (222 aa).

The active-site Schiff-base intermediate with substrate is the K91.

The protein belongs to the transaldolase family. Type 3B subfamily.

It is found in the cytoplasm. It catalyses the reaction D-sedoheptulose 7-phosphate + D-glyceraldehyde 3-phosphate = D-erythrose 4-phosphate + beta-D-fructose 6-phosphate. The protein operates within carbohydrate degradation; pentose phosphate pathway; D-glyceraldehyde 3-phosphate and beta-D-fructose 6-phosphate from D-ribose 5-phosphate and D-xylulose 5-phosphate (non-oxidative stage): step 2/3. Transaldolase is important for the balance of metabolites in the pentose-phosphate pathway. The protein is Probable transaldolase of Chlorobium luteolum (strain DSM 273 / BCRC 81028 / 2530) (Pelodictyon luteolum).